The primary structure comprises 216 residues: Imidazole glycerol phosphate synthase subunit HisH (216 aa).

A Glutamine amidotransferase type-1 domain is found at 2–216; that stretch reads RVAIIDYGSG…LISNFLRWKP (215 aa). The active-site Nucleophile is cysteine 88. Catalysis depends on residues histidine 196 and glutamate 198.

As to quaternary structure, heterodimer of HisH and HisF.

The protein localises to the cytoplasm. The catalysed reaction is 5-[(5-phospho-1-deoxy-D-ribulos-1-ylimino)methylamino]-1-(5-phospho-beta-D-ribosyl)imidazole-4-carboxamide + L-glutamine = D-erythro-1-(imidazol-4-yl)glycerol 3-phosphate + 5-amino-1-(5-phospho-beta-D-ribosyl)imidazole-4-carboxamide + L-glutamate + H(+). It carries out the reaction L-glutamine + H2O = L-glutamate + NH4(+). It participates in amino-acid biosynthesis; L-histidine biosynthesis; L-histidine from 5-phospho-alpha-D-ribose 1-diphosphate: step 5/9. In terms of biological role, IGPS catalyzes the conversion of PRFAR and glutamine to IGP, AICAR and glutamate. The HisH subunit catalyzes the hydrolysis of glutamine to glutamate and ammonia as part of the synthesis of IGP and AICAR. The resulting ammonia molecule is channeled to the active site of HisF. This is Imidazole glycerol phosphate synthase subunit HisH from Agrobacterium fabrum (strain C58 / ATCC 33970) (Agrobacterium tumefaciens (strain C58)).